A 256-amino-acid chain; its full sequence is F-actin-capping protein subunit beta (256 aa).

M1 is modified (N-acetylmethionine).

It belongs to the F-actin-capping protein beta subunit family. In terms of assembly, component of the F-actin capping complex, composed of a heterodimer of an alpha and a beta subunit.

The protein resides in the cytoplasm. It localises to the cytoskeleton. Functionally, F-actin-capping proteins bind in a Ca(2+)-independent manner to the fast growing ends of actin filaments (barbed end) thereby blocking the exchange of subunits at these ends. Unlike other capping proteins (such as gelsolin and severin), these proteins do not sever actin filaments. The polypeptide is F-actin-capping protein subunit beta (Arabidopsis thaliana (Mouse-ear cress)).